Here is a 282-residue protein sequence, read N- to C-terminus: NADPH-dependent 7-cyano-7-deazaguanine reductase (282 aa).

88-90 contacts substrate; it reads IES. 90–91 contributes to the NADPH binding site; the sequence is SK. Residue Cys190 is the Thioimide intermediate of the active site. Asp197 serves as the catalytic Proton donor. Position 229 to 230 (229 to 230) interacts with substrate; sequence HE. 258-259 is an NADPH binding site; the sequence is RG.

It belongs to the GTP cyclohydrolase I family. QueF type 2 subfamily. As to quaternary structure, homodimer.

Its subcellular location is the cytoplasm. The enzyme catalyses 7-aminomethyl-7-carbaguanine + 2 NADP(+) = 7-cyano-7-deazaguanine + 2 NADPH + 3 H(+). It functions in the pathway tRNA modification; tRNA-queuosine biosynthesis. In terms of biological role, catalyzes the NADPH-dependent reduction of 7-cyano-7-deazaguanine (preQ0) to 7-aminomethyl-7-deazaguanine (preQ1). The polypeptide is NADPH-dependent 7-cyano-7-deazaguanine reductase (Salmonella arizonae (strain ATCC BAA-731 / CDC346-86 / RSK2980)).